The primary structure comprises 176 residues: Oleosin Ara h 14.0102 (176 aa).

Alanine 2 carries the post-translational modification N-acetylalanine; alternate. The next 2 helical transmembrane spans lie at 61-81 (GTLL…LAIA) and 87-107 (FFSP…IGIL). The disordered stretch occupies residues 156 to 176 (KTKDAGQEIQTKAQDVKRSSS).

This sequence belongs to the oleosin family. As to quaternary structure, homodimer. Forms oligomers. As to expression, expressed in seeds (at protein level). Not expressed in leaves.

It localises to the lipid droplet. Its subcellular location is the membrane. May have a structural role to stabilize the lipid body during desiccation of the seed by preventing coalescence of the oil. Probably interacts with both lipid and phospholipid moieties of lipid bodies. May also provide recognition signals for specific lipase anchorage in lipolysis during seedling growth. This is Oleosin Ara h 14.0102 from Arachis hypogaea (Peanut).